The chain runs to 152 residues: MKVILTKDSKYGKENAIIEVADGYAKNFLIPKGFAMAYSQDNLKIREQKLSDLSALEHEKRSKARELQKQIEELSLMFTLDAAIDKAQNLHVHGSVSTKELKTKLLEHKIKLHDHAIQHVHLNVEGTHVVEVSLYKDIKAKLRVNLHINVKK.

It belongs to the bacterial ribosomal protein bL9 family.

Binds to the 23S rRNA. The polypeptide is Large ribosomal subunit protein bL9 (Mycoplasmopsis synoviae (strain 53) (Mycoplasma synoviae)).